A 549-amino-acid polypeptide reads, in one-letter code: Cation/acetate symporter ActP (549 aa).

A run of 13 helical transmembrane segments spans residues 33 to 53 (WQAI…TYWA), 77 to 97 (LAIA…ALVF), 103 to 123 (GLIY…LIAE), 148 to 168 (ILSA…QMVG), 183 to 203 (IAVV…GMLA), 206 to 226 (WVQI…AFMV), 262 to 282 (ISAL…PHIL), 303 to 323 (GFMG…IMLV), 355 to 375 (LFLG…VAGL), 404 to 424 (VSKI…VLFE), 428 to 448 (IAFM…PIIL), 464 to 484 (GGWL…TIWV), and 493 to 513 (IFPY…GIWF).

This sequence belongs to the sodium:solute symporter (SSF) (TC 2.A.21) family.

The protein resides in the cell inner membrane. Its function is as follows. Transports acetate. The chain is Cation/acetate symporter ActP from Escherichia coli (strain ATCC 8739 / DSM 1576 / NBRC 3972 / NCIMB 8545 / WDCM 00012 / Crooks).